Here is a 661-residue protein sequence, read N- to C-terminus: Zeaxanthin epoxidase, chloroplastic (661 aa).

Residues 1 to 59 (MLLFRATLLPSPPFFHKTYFSHLSPVIFSDDPLPVSLQRNRVSGCRKQKWRQIRTLALQ) constitute a chloroplast transit peptide. FAD-binding positions include 81–109 (RILI…LVFE) and 359–372 (IFTW…LLGD). An FHA domain is found at 555 to 609 (HIIGSISHDDSEGISIHLPFPQVHKTHARIACKDNIFYLTDLQSQYGTWITDNEG).

It depends on FAD as a cofactor. In terms of tissue distribution, expressed in flower buds, lips and leaves. Detected in roots.

The protein resides in the plastid. The protein localises to the chloroplast. It catalyses the reaction all-trans-zeaxanthin + 4 reduced [2Fe-2S]-[ferredoxin] + 2 O2 + 4 H(+) = all-trans-violaxanthin + 4 oxidized [2Fe-2S]-[ferredoxin] + 2 H2O. The protein operates within plant hormone biosynthesis; abscisate biosynthesis. In terms of biological role, zeaxanthin epoxidase that plays an important role in the xanthophyll cycle and abscisic acid (ABA) biosynthesis. Converts zeaxanthin into antheraxanthin and subsequently violaxanthin. This chain is Zeaxanthin epoxidase, chloroplastic (ZEP), found in Oncidium hybrid cultivar (Orchid).